The chain runs to 449 residues: Xylose isomerase (449 aa).

Active-site residues include His101 and Asp104. 7 residues coordinate Mg(2+): Glu232, Glu268, His271, Asp296, Asp307, Asp309, and Asp340.

This sequence belongs to the xylose isomerase family. Homotetramer. It depends on Mg(2+) as a cofactor.

Its subcellular location is the cytoplasm. The catalysed reaction is alpha-D-xylose = alpha-D-xylulofuranose. The protein is Xylose isomerase of Bifidobacterium longum (strain NCC 2705).